The primary structure comprises 181 residues: MKNNSIRTVVATGIGAALFIIIGMFVNIPIFGNTSIQLQYAVQALFSVIFGPITGFFMGFIGHALKDGIQYGNISWAWVLASGITGLVIGLFGKKYDVTMGKFSVMSMIWFNLAQALGLLIGYGVVTPIGDKIQFAQAWSYLYAQSFVAGVANFITIAIGGTLLLAIYASSRTQSGSLTKD.

The next 5 helical transmembrane spans lie at 11–31, 45–65, 72–92, 109–129, and 147–167; these read ATGIGAALFIIIGMFVNIPIF, LFSVIFGPITGFFMGFIGHAL, GNISWAWVLASGITGLVIGLF, IWFNLAQALGLLIGYGVVTPI, and FVAGVANFITIAIGGTLLLAI.

This sequence belongs to the UPF0397 family.

The protein localises to the cell membrane. This chain is UPF0397 protein STER_0346, found in Streptococcus thermophilus (strain ATCC BAA-491 / LMD-9).